Reading from the N-terminus, the 368-residue chain is MTVTGIIAEFNPFHNGHKYLLETVEGLKIIAMSGNFMQRGEPALIDKWIRSEMALKNGADIVVELPFFVSVQSADYFAQGAIDILCQLGIQQLAFGTEDVIDYQKLIKVYEKKSEQMTAYLSTLEDTLSYPQKTQKMWEIFAGVKFSGQTPNHILGLSYAKASAGKHIQLCPIKRQGAAYHSKDKNHLLASASAIRQHLNDWDFISHSVPNAGLLINNPHMSWDHYFSFLKYQILNHSDLTSIFQVNDELASRIKKAIKVSQNIDHLVDTVATKRYTKARVRRILIYILVNAKEPTLPKGIHILGFTSKGQAHLKKLKKSRPLITRIGAETWDEMTQKADSIYQLGHQDIPEQSFGRIPIIIKNERLN.

Residues 7-20, glycine 96, asparagine 152, and arginine 175 contribute to the ATP site; that span reads IAEF…HKYL.

The protein belongs to the TmcAL family.

The protein resides in the cytoplasm. It catalyses the reaction cytidine(34) in elongator tRNA(Met) + acetate + ATP = N(4)-acetylcytidine(34) in elongator tRNA(Met) + AMP + diphosphate. Its function is as follows. Catalyzes the formation of N(4)-acetylcytidine (ac(4)C) at the wobble position of elongator tRNA(Met), using acetate and ATP as substrates. First activates an acetate ion to form acetyladenylate (Ac-AMP) and then transfers the acetyl group to tRNA to form ac(4)C34. The protein is tRNA(Met) cytidine acetate ligase of Streptococcus pyogenes serotype M5 (strain Manfredo).